A 657-amino-acid polypeptide reads, in one-letter code: Hemocyanin A chain (657 aa).

Residues Cys93 and Cys98 are joined by a disulfide bond. An N-linked (GlcNAc...) asparagine glycan is attached at Asn167. Residues His194, His198, His224, His344, His348, and His384 each coordinate Cu cation. 2 cysteine pairs are disulfide-bonded: Cys483–Cys502 and Cys562–Cys609. Residues 594–616 (EGHNGGHDYGGTHAQCGVHGEAY) are disordered.

This sequence belongs to the tyrosinase family. Hemocyanin subfamily. In terms of assembly, hexamer of a number of different chains, of which A, B, and C have been identified. Hemolymph.

The protein resides in the secreted. The protein localises to the extracellular space. In terms of biological role, hemocyanins are copper-containing oxygen carriers occurring freely dissolved in the hemolymph of many mollusks and arthropods. The chain is Hemocyanin A chain from Panulirus interruptus (California spiny lobster).